The primary structure comprises 236 residues: Small ribosomal subunit protein uS2c (236 aa).

This sequence belongs to the universal ribosomal protein uS2 family.

It is found in the plastid. It localises to the chloroplast. This Liriodendron tulipifera (Tuliptree) protein is Small ribosomal subunit protein uS2c (rps2).